The sequence spans 321 residues: Transaldolase (321 aa).

Lys132 acts as the Schiff-base intermediate with substrate in catalysis.

Belongs to the transaldolase family. Type 1 subfamily. Homodimer.

Its subcellular location is the cytoplasm. The enzyme catalyses D-sedoheptulose 7-phosphate + D-glyceraldehyde 3-phosphate = D-erythrose 4-phosphate + beta-D-fructose 6-phosphate. It functions in the pathway carbohydrate degradation; pentose phosphate pathway; D-glyceraldehyde 3-phosphate and beta-D-fructose 6-phosphate from D-ribose 5-phosphate and D-xylulose 5-phosphate (non-oxidative stage): step 2/3. Transaldolase is important for the balance of metabolites in the pentose-phosphate pathway. This Rhizobium rhizogenes (strain K84 / ATCC BAA-868) (Agrobacterium radiobacter) protein is Transaldolase.